The sequence spans 299 residues: Epimerase family protein SH2119 (299 aa).

The protein belongs to the NAD(P)-dependent epimerase/dehydratase family. SDR39U1 subfamily.

The polypeptide is Epimerase family protein SH2119 (Staphylococcus haemolyticus (strain JCSC1435)).